The sequence spans 963 residues: SH3 domain-binding protein 4 (963 aa).

In terms of domain architecture, SH3 1 spans G55–Y114. Phosphoserine is present on residues S131, S246, S251, S279, and S296. A ZU5 domain is found at T317 to V454. S637 is modified (phosphoserine). In terms of domain architecture, SH3 2 spans S654–R724.

In terms of assembly, homodimer or homooligomer. Interacts with DNM2, EPS15, clathrin, the adapter protein complex 2/AP-2 and TFRC. Interacts with the Rag GTPases RRAGA, RRAGB, RRAGC and RRAGD; the interaction is most probably direct, preferentially occurs with their inactive GDP-bound form and is negatively regulated by amino acids. (Microbial infection) Interacts with molluscum contagiosum virus protein MC159L; this interaction is important for the suppression of autophagy. Phosphorylated upon EGF stimulation. Phosphorylation prevents interaction with DNM2. In terms of tissue distribution, expressed in all tissues tested with higher expression in pancreas. Expressed by retinal pigment epithelial cells (at protein level).

It localises to the membrane. The protein resides in the clathrin-coated pit. It is found in the cytoplasmic vesicle. The protein localises to the clathrin-coated vesicle. Its subcellular location is the nucleus. May function in transferrin receptor internalization at the plasma membrane through a cargo-specific control of clathrin-mediated endocytosis. Alternatively, may act as a negative regulator of the amino acid-induced TOR signaling by inhibiting the formation of active Rag GTPase complexes. Preferentially binds inactive Rag GTPase complexes and prevents their interaction with the mTORC1 complex inhibiting its relocalization to lysosomes and its activation. Thereby, may indirectly regulate cell growth, proliferation and autophagy. In Homo sapiens (Human), this protein is SH3 domain-binding protein 4 (SH3BP4).